A 242-amino-acid polypeptide reads, in one-letter code: Ubiquinone biosynthesis O-methyltransferase (242 aa).

Residues R44, G64, D85, and M129 each coordinate S-adenosyl-L-methionine.

Belongs to the methyltransferase superfamily. UbiG/COQ3 family.

The enzyme catalyses a 3-demethylubiquinol + S-adenosyl-L-methionine = a ubiquinol + S-adenosyl-L-homocysteine + H(+). The catalysed reaction is a 3-(all-trans-polyprenyl)benzene-1,2-diol + S-adenosyl-L-methionine = a 2-methoxy-6-(all-trans-polyprenyl)phenol + S-adenosyl-L-homocysteine + H(+). The protein operates within cofactor biosynthesis; ubiquinone biosynthesis. In terms of biological role, O-methyltransferase that catalyzes the 2 O-methylation steps in the ubiquinone biosynthetic pathway. The sequence is that of Ubiquinone biosynthesis O-methyltransferase from Yersinia enterocolitica serotype O:8 / biotype 1B (strain NCTC 13174 / 8081).